The primary structure comprises 229 residues: Potassium/proton antiporter CemA (229 aa).

The next 4 helical transmembrane spans lie at phenylalanine 7–phenylalanine 27, isoleucine 114–leucine 134, isoleucine 154–isoleucine 174, and isoleucine 189–isoleucine 209.

Belongs to the CemA family.

It is found in the plastid. It localises to the chloroplast inner membrane. It catalyses the reaction K(+)(in) + H(+)(out) = K(+)(out) + H(+)(in). Contributes to K(+)/H(+) antiport activity by supporting proton efflux to control proton extrusion and homeostasis in chloroplasts in a light-dependent manner to modulate photosynthesis. Prevents excessive induction of non-photochemical quenching (NPQ) under continuous-light conditions. Indirectly promotes efficient inorganic carbon uptake into chloroplasts. The sequence is that of Potassium/proton antiporter CemA from Platanus occidentalis (Sycamore).